A 248-amino-acid polypeptide reads, in one-letter code: UDP-N-acetyl-D-mannosaminuronic acid transferase (248 aa).

It belongs to the glycosyltransferase 26 family.

The catalysed reaction is UDP-N-acetyl-alpha-D-mannosaminouronate + N-acetyl-alpha-D-glucosaminyl-di-trans,octa-cis-undecaprenyl diphosphate = beta-D-ManNAcA-(1-&gt;4)-alpha-D-GlcNAc-di-trans,octa-cis-undecaprenyl diphosphate + UDP + H(+). It participates in bacterial outer membrane biogenesis; enterobacterial common antigen biosynthesis. Catalyzes the synthesis of Und-PP-GlcNAc-ManNAcA (Lipid II), the second lipid-linked intermediate involved in enterobacterial common antigen (ECA) synthesis. This chain is UDP-N-acetyl-D-mannosaminuronic acid transferase, found in Klebsiella pneumoniae subsp. pneumoniae (strain ATCC 700721 / MGH 78578).